The following is a 1732-amino-acid chain: Polycystin-1-like protein 3 (1732 aa).

The first 23 residues, Met-1–Leu-23, serve as a signal peptide directing secretion. At Asn-24–Asn-697 the chain is on the extracellular side. Residues Gly-30–Gln-138 enclose the C-type lectin domain. Intrachain disulfides connect Cys-51/Cys-137 and Cys-112/Cys-129. N-linked (GlcNAc...) asparagine glycans are attached at residues Asn-286, Asn-363, Asn-515, Asn-537, and Asn-575. A GAIN-B domain is found at Thr-523–Glu-685. 2 cysteine pairs are disulfide-bonded: Cys-635–Cys-663 and Cys-650–Cys-665. Residues Cys-635 to Glu-685 form a GPS region. A helical transmembrane segment spans residues Pro-698–Ala-718. The Cytoplasmic portion of the chain corresponds to Arg-719 to Arg-905. In terms of domain architecture, PLAT spans Phe-743 to Ile-860. Residues Leu-906–Ile-926 form a helical membrane-spanning segment. The Extracellular segment spans residues Asn-927–Pro-939. Residues Phe-940–Ile-960 form a helical membrane-spanning segment. Topologically, residues Asn-961–Thr-1154 are cytoplasmic. The helical transmembrane segment at Ser-1155 to Tyr-1175 threads the bilayer. The Extracellular portion of the chain corresponds to Ser-1176–Asn-1198. A helical transmembrane segment spans residues Ile-1199–Ser-1219. Residues Arg-1220–Ile-1289 are Cytoplasmic-facing. Residues Leu-1290–Tyr-1300 traverse the membrane as a helical segment. Topologically, residues Ser-1301 to Lys-1461 are extracellular. Residues Gly-1462–Gln-1491 traverse the membrane as a helical segment. Topologically, residues Lys-1492–Arg-1500 are cytoplasmic. The chain crosses the membrane as a helical span at residues Asn-1501–Met-1519. Residues Lys-1520–Ser-1550 are Extracellular-facing. A helical transmembrane segment spans residues Ala-1551–Arg-1572. Residues His-1573–Asp-1589 are Cytoplasmic-facing. The helical transmembrane segment at Glu-1590–Gly-1614 threads the bilayer. Residues Phe-1613–Gly-1651 form a channel pore-region region. Residues Cys-1615–Asp-1647 are Extracellular-facing. The helical transmembrane segment at Pro-1648–Ile-1667 threads the bilayer. Residues Asn-1668–Pro-1732 are Cytoplasmic-facing.

It belongs to the polycystin family. Heterotetramer with PKD2L1, composed of 3 subunit of PKD2L1 and 1 subunit of PKD1L3. Autoproteolytically processed at the GPS region of the GAIN-B domain; this cleavage modulates receptor activity. As to expression, highly expressed in placenta, weakly in heart and lung.

The protein resides in the cell membrane. It catalyses the reaction Ca(2+)(in) = Ca(2+)(out). The enzyme catalyses Na(+)(in) = Na(+)(out). The catalysed reaction is K(+)(in) = K(+)(out). It carries out the reaction Mg(2+)(in) = Mg(2+)(out). Its activity is regulated as follows. The non-selective cation channel is gated following an off-response property by acid: gated open after the removal of acid stimulus, but not during acid application. Regulation of non-selective cation channel activity by external Ca(2+) is bimodal, first sensitizing and subsequently inactivating the current. Functionally, pore-forming subunit of a heterotetrameric, non-selective cation channel that is permeable to Ca(2+). Also shows permeability towards NA(1+), K(+) and Mg(2+). Heterotetrameric complex channel is activated by external low pH and Ca(2+), but opens only when the extracellular pH rises again and after the removal of acid stimulus. May act as a sour taste receptor in gustatory cells; however, its contribution to sour taste perception is unclear in vivo and may be indirect. The sequence is that of Polycystin-1-like protein 3 from Homo sapiens (Human).